Consider the following 591-residue polypeptide: Aspartate--tRNA(Asp/Asn) ligase (591 aa).

Residue glutamate 174 coordinates L-aspartate. The tract at residues 198 to 201 (QLFK) is aspartate. Position 220 (arginine 220) interacts with L-aspartate. ATP contacts are provided by residues 220 to 222 (RDE) and glutamine 229. An L-aspartate-binding site is contributed by histidine 450. Glutamate 483 is a binding site for ATP. An L-aspartate-binding site is contributed by arginine 490. Position 535 to 538 (535 to 538 (GLDR)) interacts with ATP.

The protein belongs to the class-II aminoacyl-tRNA synthetase family. Type 1 subfamily. As to quaternary structure, homodimer.

Its subcellular location is the cytoplasm. The enzyme catalyses tRNA(Asx) + L-aspartate + ATP = L-aspartyl-tRNA(Asx) + AMP + diphosphate. Functionally, aspartyl-tRNA synthetase with relaxed tRNA specificity since it is able to aspartylate not only its cognate tRNA(Asp) but also tRNA(Asn). Reaction proceeds in two steps: L-aspartate is first activated by ATP to form Asp-AMP and then transferred to the acceptor end of tRNA(Asp/Asn). The sequence is that of Aspartate--tRNA(Asp/Asn) ligase from Pseudomonas putida (strain ATCC 700007 / DSM 6899 / JCM 31910 / BCRC 17059 / LMG 24140 / F1).